Here is a 50-residue protein sequence, read N- to C-terminus: Defensin D4 (50 aa).

4 disulfides stabilise this stretch: cysteine 3–cysteine 50, cysteine 14–cysteine 35, cysteine 20–cysteine 44, and cysteine 24–cysteine 46.

In terms of tissue distribution, detected in seeds (at protein level).

The protein resides in the secreted. Functionally, antimicrobial peptide with antifungal activity. The polypeptide is Defensin D4 (Nigella sativa (Black cumin)).